The primary structure comprises 357 residues: MAKEKASSQEQEQKVKDEKLKQLNLAVESLEKQFGKGAIMRLGDDAVVQVPVVSTGSISLDYALGVGGLPKGRIVEIYGPESSGKTTLALHAIAEAQKAGGIAAFVDAEHAFDQSYARKLGIDIKSLLISQPESGEQALSITETLVRSGAVDIIVVDSVAALVPQAELEGEMGDSQMGLQARLMSQALRKLTGAISKSNCVAIFINQLRDKIGVMYGSPETTTGGKALKFYASVRLDIRKIAQIKDGTEIVGNRTKVKVVKNKVAPPFKTVEFDIIYGEGVSRIGELIDLAVELGIVKKAGAWFSYENDKLGQGRETVKTLLKADEALFNKIYAQVKEQMVGLKLEGSSDDDSSSDS.

79-86 (GPESSGKT) lines the ATP pocket.

It belongs to the RecA family.

Its subcellular location is the cytoplasm. In terms of biological role, can catalyze the hydrolysis of ATP in the presence of single-stranded DNA, the ATP-dependent uptake of single-stranded DNA by duplex DNA, and the ATP-dependent hybridization of homologous single-stranded DNAs. It interacts with LexA causing its activation and leading to its autocatalytic cleavage. The polypeptide is Protein RecA (Chloroherpeton thalassium (strain ATCC 35110 / GB-78)).